Here is a 610-residue protein sequence, read N- to C-terminus: UvrABC system protein C (610 aa).

The GIY-YIG domain occupies S16–V94. In terms of domain architecture, UVR spans D204–V239.

It belongs to the UvrC family. Interacts with UvrB in an incision complex.

It localises to the cytoplasm. In terms of biological role, the UvrABC repair system catalyzes the recognition and processing of DNA lesions. UvrC both incises the 5' and 3' sides of the lesion. The N-terminal half is responsible for the 3' incision and the C-terminal half is responsible for the 5' incision. The chain is UvrABC system protein C from Salmonella agona (strain SL483).